Reading from the N-terminus, the 775-residue chain is Cation channel sperm-associated protein subunit epsilon-like protein (775 aa).

Residues 1-20 form the signal peptide; the sequence is MLARRVVAALLLWLSCCVSA. 2 N-linked (GlcNAc...) asparagine glycosylation sites follow: Asn62 and Asn114.

The protein belongs to the CATSPERD family.

In Mus musculus (Mouse), this protein is Cation channel sperm-associated protein subunit epsilon-like protein.